Reading from the N-terminus, the 270-residue chain is 4-hydroxy-tetrahydrodipicolinate reductase (270 aa).

Residues 11–16 and E37 each bind NAD(+); that span reads GAGGRM. R38 contacts NADP(+). NAD(+) is bound by residues 101 to 103 and 125 to 128; these read GTT and APNM. H158 serves as the catalytic Proton donor/acceptor. H159 is a binding site for (S)-2,3,4,5-tetrahydrodipicolinate. Catalysis depends on K162, which acts as the Proton donor. 168–169 lines the (S)-2,3,4,5-tetrahydrodipicolinate pocket; the sequence is GT.

The protein belongs to the DapB family.

It localises to the cytoplasm. The catalysed reaction is (S)-2,3,4,5-tetrahydrodipicolinate + NAD(+) + H2O = (2S,4S)-4-hydroxy-2,3,4,5-tetrahydrodipicolinate + NADH + H(+). It catalyses the reaction (S)-2,3,4,5-tetrahydrodipicolinate + NADP(+) + H2O = (2S,4S)-4-hydroxy-2,3,4,5-tetrahydrodipicolinate + NADPH + H(+). It functions in the pathway amino-acid biosynthesis; L-lysine biosynthesis via DAP pathway; (S)-tetrahydrodipicolinate from L-aspartate: step 4/4. Functionally, catalyzes the conversion of 4-hydroxy-tetrahydrodipicolinate (HTPA) to tetrahydrodipicolinate. This Shewanella sp. (strain MR-4) protein is 4-hydroxy-tetrahydrodipicolinate reductase.